A 133-amino-acid chain; its full sequence is Large ribosomal subunit protein uL22 (133 aa).

It belongs to the universal ribosomal protein uL22 family. In terms of assembly, part of the 50S ribosomal subunit.

Functionally, this protein binds specifically to 23S rRNA; its binding is stimulated by other ribosomal proteins, e.g. L4, L17, and L20. It is important during the early stages of 50S assembly. It makes multiple contacts with different domains of the 23S rRNA in the assembled 50S subunit and ribosome. In terms of biological role, the globular domain of the protein is located near the polypeptide exit tunnel on the outside of the subunit, while an extended beta-hairpin is found that lines the wall of the exit tunnel in the center of the 70S ribosome. This chain is Large ribosomal subunit protein uL22, found in Granulibacter bethesdensis (strain ATCC BAA-1260 / CGDNIH1).